The primary structure comprises 610 residues: ABC transporter ATP-binding protein/permease wht-3 (610 aa).

The region spanning 42–277 (VKTRKKLFSK…FADCGHPIPK (236 aa)) is the ABC transporter domain. 74–81 (GASGAGKT) provides a ligand contact to ATP. The next 5 helical transmembrane spans lie at 396 to 416 (ALYFLIAELTFSTMFGIMTFM), 446 to 466 (LPLFTIDGALMIVISYWMIGL), 477 to 497 (ILISVLVEQSATSCGLFLACL), 503 to 523 (LAIAFAVPASGLFALLSGLYG), and 584 to 604 (VIGLCSIVIFFYLAGYIALFI).

Belongs to the ABC transporter superfamily. ABCG family. Eye pigment precursor importer (TC 3.A.1.204) subfamily.

The protein localises to the membrane. In terms of biological role, required for efficient RNA interference (RNAi) of pop-1 indicating a role in the germline development. The chain is ABC transporter ATP-binding protein/permease wht-3 (wht-3) from Caenorhabditis elegans.